Consider the following 691-residue polypeptide: Protein phosphatase Slingshot homolog (691 aa).

The DEK-C domain maps to 236–291 (EETERIIKLKLRDILRESDLENITSKEVRSALEQHTLCALQDYKEFIDNEMIIILA). Positions 295 to 436 (RPSEIFPYLY…LQTYQGILGA (142 aa)) constitute a Tyrosine-protein phosphatase domain. Catalysis depends on C380, which acts as the Phosphocysteine intermediate. The stretch at 532–580 (NEHVLSKEQIIQEEKKVMELEKGPEWVVKNNVLEEMKETEERELPNFEL) forms a coiled coil. The segment at 585-620 (NQSRERDQETIKESSVITQGSSSLDEVFESSTPTRS) is disordered. The span at 587-596 (SRERDQETIK) shows a compositional bias: basic and acidic residues. Polar residues predominate over residues 597–619 (ESSVITQGSSSLDEVFESSTPTR).

This sequence belongs to the protein-tyrosine phosphatase family. As to quaternary structure, interacts with actin and this stimulates phosphatase activity.

The protein resides in the cytoplasm. Its subcellular location is the cytoskeleton. It is found in the cleavage furrow. The protein localises to the midbody. It catalyses the reaction O-phospho-L-tyrosyl-[protein] + H2O = L-tyrosyl-[protein] + phosphate. It carries out the reaction O-phospho-L-seryl-[protein] + H2O = L-seryl-[protein] + phosphate. The enzyme catalyses O-phospho-L-threonyl-[protein] + H2O = L-threonyl-[protein] + phosphate. In terms of biological role, protein phosphatase which regulates actin filament dynamics. Dephosphorylates and activates the actin binding/depolymerizing factor cofilin, which subsequently binds to actin filaments and stimulates their disassembly. Required for completion of the gastrulation movement and for cytokinesis. The chain is Protein phosphatase Slingshot homolog (ssh) from Xenopus laevis (African clawed frog).